Consider the following 1273-residue polypeptide: DNA-directed RNA polymerase subunit beta (1273 aa).

Belongs to the RNA polymerase beta chain family. The RNAP catalytic core consists of 2 alpha, 1 beta, 1 beta' and 1 omega subunit. When a sigma factor is associated with the core the holoenzyme is formed, which can initiate transcription.

It catalyses the reaction RNA(n) + a ribonucleoside 5'-triphosphate = RNA(n+1) + diphosphate. DNA-dependent RNA polymerase catalyzes the transcription of DNA into RNA using the four ribonucleoside triphosphates as substrates. This is DNA-directed RNA polymerase subunit beta from Onion yellows phytoplasma (strain OY-M).